Reading from the N-terminus, the 137-residue chain is Large ribosomal subunit protein uL16 (137 aa).

Belongs to the universal ribosomal protein uL16 family. In terms of assembly, part of the 50S ribosomal subunit.

In terms of biological role, binds 23S rRNA and is also seen to make contacts with the A and possibly P site tRNAs. The polypeptide is Large ribosomal subunit protein uL16 (Mesorhizobium japonicum (strain LMG 29417 / CECT 9101 / MAFF 303099) (Mesorhizobium loti (strain MAFF 303099))).